Reading from the N-terminus, the 325-residue chain is Anthranilate phosphoribosyltransferase (325 aa).

5-phospho-alpha-D-ribose 1-diphosphate contacts are provided by residues G74, 77–78 (GD), T82, 84–87 (NVST), 101–109 (KHGNVSITS), and S113. G74 is an anthranilate binding site. S86 serves as a coordination point for Mg(2+). Anthranilate is bound at residue N104. R159 provides a ligand contact to anthranilate. 2 residues coordinate Mg(2+): D217 and E218.

The protein belongs to the anthranilate phosphoribosyltransferase family. Homodimer. The cofactor is Mg(2+).

The enzyme catalyses N-(5-phospho-beta-D-ribosyl)anthranilate + diphosphate = 5-phospho-alpha-D-ribose 1-diphosphate + anthranilate. It participates in amino-acid biosynthesis; L-tryptophan biosynthesis; L-tryptophan from chorismate: step 2/5. Functionally, catalyzes the transfer of the phosphoribosyl group of 5-phosphorylribose-1-pyrophosphate (PRPP) to anthranilate to yield N-(5'-phosphoribosyl)-anthranilate (PRA). In Thermococcus kodakarensis (strain ATCC BAA-918 / JCM 12380 / KOD1) (Pyrococcus kodakaraensis (strain KOD1)), this protein is Anthranilate phosphoribosyltransferase.